Consider the following 1091-residue polypeptide: Voltage-dependent calcium channel subunit alpha-2/delta-3 (1091 aa).

The first 33 residues, 1-33 (MAGPGSLCCASRGASALLATALLYAALGDVVRS), serve as a signal peptide directing secretion. Residues 34 to 1068 (EQQIPLSVVK…HPEENARECG (1035 aa)) lie on the Extracellular side of the membrane. N-linked (GlcNAc...) asparagine glycosylation occurs at Asn166. The 183-residue stretch at 256-438 (DVVILVDVSG…ENVMEYLHVL (183 aa)) folds into the VWFA domain. Asp262, Ser264, and Ser266 together coordinate a divalent metal cation. Residues 262–266 (DVSGS) carry the MIDAS-like motif motif. Asn309 is a glycosylation site (N-linked (GlcNAc...) asparagine). Cys412 and Cys1055 are disulfide-bonded. The Cache domain occupies 452–549 (WTEAYIDSTL…RPLYEEGKKR (98 aa)). Residues Asn553 and Asn632 are each glycosylated (N-linked (GlcNAc...) asparagine). Tyr924 is subject to Phosphotyrosine. A helical membrane pass occupies residues 1069–1089 (GASSLQAQAALLLLPLVSSLF). Over 1090 to 1091 (SR) the chain is Cytoplasmic.

Belongs to the calcium channel subunit alpha-2/delta family. In terms of assembly, dimer formed of alpha-2-2 and delta-2 chains; disulfide-linked. Voltage-dependent calcium channels are multisubunit complexes, consisting of alpha-1 (CACNA1), alpha-2 (CACNA2D), beta (CACNB) and delta (CACNA2D) subunits in a 1:1:1:1 ratio. Post-translationally, N-glycosylated. May be proteolytically processed into subunits alpha-2-3 and delta-3 that are disulfide-linked. It is however unclear whether such cleavage really takes place in vivo and has a functional role. Brain-specific. Predominantly expressed in the caudate putamen, entorhinal complex, hippocampus and cortex.

The protein resides in the membrane. In terms of biological role, the alpha-2/delta subunit of voltage-dependent calcium channels regulates calcium current density and activation/inactivation kinetics of the calcium channel. Acts as a regulatory subunit for P/Q-type calcium channel (CACNA1A), N-type (CACNA1B), L-type (CACNA1C OR CACNA1D) but not T-type (CACNA1G). The polypeptide is Voltage-dependent calcium channel subunit alpha-2/delta-3 (Cacna2d3) (Mus musculus (Mouse)).